The chain runs to 157 residues: S-ribosylhomocysteine lyase (157 aa).

Positions 60, 64, and 127 each coordinate Fe cation.

It belongs to the LuxS family. As to quaternary structure, homodimer. It depends on Fe cation as a cofactor.

The catalysed reaction is S-(5-deoxy-D-ribos-5-yl)-L-homocysteine = (S)-4,5-dihydroxypentane-2,3-dione + L-homocysteine. Involved in the synthesis of autoinducer 2 (AI-2) which is secreted by bacteria and is used to communicate both the cell density and the metabolic potential of the environment. The regulation of gene expression in response to changes in cell density is called quorum sensing. Catalyzes the transformation of S-ribosylhomocysteine (RHC) to homocysteine (HC) and 4,5-dihydroxy-2,3-pentadione (DPD). In Helicobacter acinonychis (strain Sheeba), this protein is S-ribosylhomocysteine lyase.